The chain runs to 422 residues: Retinoic acid receptor RXR-beta-B (422 aa).

Positions 1–89 are modulating; the sequence is MNSLPPSTSA…SGPMLSQKRM (89 aa). 2 NR C4-type zinc fingers span residues 90-110 and 126-150; these read CAIC…CEGC and CRDN…YQKC. Positions 90-155 form a DNA-binding region, nuclear receptor; sequence CAICGDRSSG…RYQKCLAMGM (66 aa). A hinge region spans residues 156–178; it reads KREAVQEERQKNKERDGDYECSS. Basic and acidic residues predominate over residues 161 to 173; that stretch reads QEERQKNKERDGD. The disordered stretch occupies residues 161-182; the sequence is QEERQKNKERDGDYECSSSANE. An NR LBD domain is found at 181–421; sequence NEEMPVEKIL…TFLMEMLESP (241 aa).

Belongs to the nuclear hormone receptor family. NR2 subfamily. Homodimer. Heterodimer; with a rar molecule. Binds DNA preferentially as a rar/rxr heterodimer. Heterodimerizes with rarga. As to expression, shows uniform expression from the blastula to mid-gastrula stages. At 12 hours post-fertilization (hpf), expressed ubiquitously but more weakly. At 24 hpf, restricted to the ventral diencephalon, pharangeal endoderm and trunk and tail mesoderm; mesoderm expression is in medial cells of each somite along the dorsoventral axis, forming stripes. At 48 hpf, expressed in forebrain, eye, midbrain and anterior hindbrain.

Its subcellular location is the nucleus. Functionally, receptor for retinoic acid. Retinoic acid receptors bind as heterodimers to their target response elements in response to their ligands, all-trans or 9-cis retinoic acid, and regulate gene expression in various biological processes. The rar/rxr heterodimers bind to the retinoic acid response elements (RARE) composed of tandem 5'-AGGTCA-3' sites known as DR1-DR5. The high affinity ligand for rxrs is 9-cis retinoic acid. This chain is Retinoic acid receptor RXR-beta-B (rxrbb), found in Danio rerio (Zebrafish).